The sequence spans 189 residues: Transcription factor FapR (189 aa).

Belongs to the FapR family.

Transcriptional factor involved in regulation of membrane lipid biosynthesis by repressing genes involved in fatty acid and phospholipid metabolism. The chain is Transcription factor FapR from Listeria welshimeri serovar 6b (strain ATCC 35897 / DSM 20650 / CCUG 15529 / CIP 8149 / NCTC 11857 / SLCC 5334 / V8).